Consider the following 44-residue polypeptide: DNA-directed RNA polymerase subunit Rpo12 (44 aa).

Zn(2+) is bound by residues cysteine 8, cysteine 22, and cysteine 25.

This sequence belongs to the archaeal Rpo12/eukaryotic RPC10 RNA polymerase subunit family. In terms of assembly, part of the RNA polymerase complex. The cofactor is Zn(2+).

The protein localises to the cytoplasm. It catalyses the reaction RNA(n) + a ribonucleoside 5'-triphosphate = RNA(n+1) + diphosphate. DNA-dependent RNA polymerase (RNAP) catalyzes the transcription of DNA into RNA using the four ribonucleoside triphosphates as substrates. The sequence is that of DNA-directed RNA polymerase subunit Rpo12 from Haloquadratum walsbyi (strain DSM 16790 / HBSQ001).